The primary structure comprises 249 residues: Sulfate transporter CysZ (249 aa).

The next 4 helical transmembrane spans lie at 26-46 (LFVL…IYFA), 71-91 (VIWP…FTML), 150-170 (LFIL…WLLF), and 206-226 (LGFG…ILMM).

The protein belongs to the CysZ family.

Its subcellular location is the cell inner membrane. High affinity, high specificity proton-dependent sulfate transporter, which mediates sulfate uptake. Provides the sulfur source for the cysteine synthesis pathway. In Pseudomonas fluorescens (strain ATCC BAA-477 / NRRL B-23932 / Pf-5), this protein is Sulfate transporter CysZ.